Consider the following 571-residue polypeptide: Streptolysin O (571 aa).

A signal peptide spans 1–33; it reads MSNKKTFKKYSRVAGLLTAALIIGNLVTANAES. Positions 30-108 are disordered; sequence NAESNKQNTA…KKSEEDHTEE (79 aa). Residues 37–48 show a composition bias toward low complexity; sequence NTASTETTTTNE. Basic and acidic residues-rich tracts occupy residues 50-68 and 79-108; these read PKPESSELTTEKAGQKTDD and APKEMPLESAEKEEKKSEDKKKSEEDHTEE. A run of 4 beta stranded transmembrane segments spans residues 260–273, 280–289, 358–367, and 375–387; these read KSQIEAALNVNSKI, IDFKSISKGE, SNDVEAAFSA, and KTNGKYSDILENS. The short motif at 529-539 is the Conserved undecapeptide element; that stretch reads ECTGLAWEWWR. The Cholesterol binding signature appears at 561 to 562; sequence TL.

This sequence belongs to the cholesterol-dependent cytolysin family. In terms of assembly, homooligomeric pore complex of 35 to 50 subunits; when inserted in the host membrane.

The protein localises to the secreted. It is found in the host cell membrane. A cholesterol-dependent toxin that causes cytolysis by forming pores in cholesterol containing host membranes. After binding to target membranes, the protein undergoes a major conformation change, leading to its insertion in the host membrane and formation of an oligomeric pore complex. Cholesterol is required for binding to host membranes, membrane insertion and pore formation; cholesterol binding is mediated by a Thr-Leu pair in the C-terminus. Can be reversibly inactivated by oxidation. In Streptococcus pyogenes serotype M3 (strain ATCC BAA-595 / MGAS315), this protein is Streptolysin O (slo).